Consider the following 577-residue polypeptide: Lysine-specific demethylase 7B (577 aa).

The segment at 5-56 (QLYCVCRQPYDVSRFMIECDICKDWFHGSCVEVEEHYAVDIDVYHCPNCDVH) adopts a PHD-type zinc-finger fold. Residues 198-354 (FSDTKMAELV…MQLRCYEMER (157 aa)) form the JmjC domain. Thr-247 is a binding site for substrate. His-250 and Asp-252 together coordinate Fe cation. Position 267 (Lys-267) interacts with substrate. His-322 is a Fe cation binding site. The segment at 460-513 (CPSTRSAHERGSHARKTARRLRGHHHHHHRHHHHHHHHHHHNHQHSDGPKAPSH) is disordered. Residues 472–502 (HARKTARRLRGHHHHHHRHHHHHHHHHHHNH) show a composition bias toward basic residues.

It belongs to the JHDM1 histone demethylase family. JHDM1D subfamily. Requires Fe(2+) as cofactor. As to expression, predominantly expressed in brain.

Its subcellular location is the nucleus. Its function is as follows. Histone demethylase required for brain development. Specifically demethylates dimethylated 'Lys-9' and 'Lys-27' (H3K9me2 and H3K27me2, respectively) of histone H3 and monomethylated histone H4 'Lys-20' residue (H4K20Me1), thereby playing a central role in histone code. This Danio rerio (Zebrafish) protein is Lysine-specific demethylase 7B (jhdm1db).